Reading from the N-terminus, the 506-residue chain is Ribose import ATP-binding protein RbsA 1 (506 aa).

2 ABC transporter domains span residues 5–241 and 254–498; these read LALT…VGRR and RDAA…TSDA. Residue 37 to 44 participates in ATP binding; that stretch reads GENGAGKS.

It belongs to the ABC transporter superfamily. Ribose importer (TC 3.A.1.2.1) family. As to quaternary structure, the complex is composed of an ATP-binding protein (RbsA), two transmembrane proteins (RbsC) and a solute-binding protein (RbsB).

It is found in the cell inner membrane. The catalysed reaction is D-ribose(out) + ATP + H2O = D-ribose(in) + ADP + phosphate + H(+). In terms of biological role, part of the ABC transporter complex RbsABC involved in ribose import. Responsible for energy coupling to the transport system. In Burkholderia thailandensis (strain ATCC 700388 / DSM 13276 / CCUG 48851 / CIP 106301 / E264), this protein is Ribose import ATP-binding protein RbsA 1.